The following is a 204-amino-acid chain: Urease accessory protein UreG (204 aa).

11 to 18 (GPVGAGKT) provides a ligand contact to GTP.

The protein belongs to the SIMIBI class G3E GTPase family. UreG subfamily. In terms of assembly, homodimer. UreD, UreF and UreG form a complex that acts as a GTP-hydrolysis-dependent molecular chaperone, activating the urease apoprotein by helping to assemble the nickel containing metallocenter of UreC. The UreE protein probably delivers the nickel.

The protein localises to the cytoplasm. Facilitates the functional incorporation of the urease nickel metallocenter. This process requires GTP hydrolysis, probably effectuated by UreG. The sequence is that of Urease accessory protein UreG from Staphylococcus epidermidis (strain ATCC 12228 / FDA PCI 1200).